Here is a 367-residue protein sequence, read N- to C-terminus: Homoserine O-acetyltransferase (367 aa).

The AB hydrolase-1 domain occupies 44–350 (NAILVTHAWT…AYGHDAFLLE (307 aa)). The active-site Nucleophile is the S150. R217 lines the substrate pocket. Residues D311 and H344 contribute to the active site. D345 contributes to the substrate binding site.

This sequence belongs to the AB hydrolase superfamily. MetX family. As to quaternary structure, homodimer.

The protein localises to the cytoplasm. The enzyme catalyses L-homoserine + acetyl-CoA = O-acetyl-L-homoserine + CoA. It participates in amino-acid biosynthesis; L-methionine biosynthesis via de novo pathway; O-acetyl-L-homoserine from L-homoserine: step 1/1. Functionally, transfers an acetyl group from acetyl-CoA to L-homoserine, forming acetyl-L-homoserine. This chain is Homoserine O-acetyltransferase, found in Citrifermentans bemidjiense (strain ATCC BAA-1014 / DSM 16622 / JCM 12645 / Bem) (Geobacter bemidjiensis).